We begin with the raw amino-acid sequence, 103 residues long: Histone H4 (103 aa).

Gly residues predominate over residues 1–14; the sequence is MTGRGKGGKGLGKG. The interval 1–20 is disordered; it reads MTGRGKGGKGLGKGGAKRHR. Residues Lys6 and Lys13 each carry the N6-acetyl-N6-methyllysine; alternate modification. The DNA-binding element occupies 17-21; sequence KRHRK.

The protein belongs to the histone H4 family. In terms of assembly, the nucleosome is a histone octamer containing two molecules each of H2A, H2B, H3 and H4 assembled in one H3-H4 heterotetramer and two H2A-H2B heterodimers. The octamer wraps approximately 147 bp of DNA.

The protein localises to the nucleus. Its subcellular location is the chromosome. Its function is as follows. Core component of nucleosome. Nucleosomes wrap and compact DNA into chromatin, limiting DNA accessibility to the cellular machineries which require DNA as a template. Histones thereby play a central role in transcription regulation, DNA repair, DNA replication and chromosomal stability. DNA accessibility is regulated via a complex set of post-translational modifications of histones, also called histone code, and nucleosome remodeling. The chain is Histone H4 (His4) from Myrmica ruginodis (Red ant).